Here is a 438-residue protein sequence, read N- to C-terminus: Sphingomyelinase phosphodiesterase D (438 aa).

An N-terminal signal peptide occupies residues 1 to 17 (MKIILILVLVLVVSINA). Residues D27 and H29 each coordinate Zn(2+). Residue N40 is glycosylated (N-linked (GlcNAc...) asparagine). Zn(2+) contacts are provided by D111 and N148. N160 carries N-linked (GlcNAc...) asparagine glycosylation. H247 serves as a coordination point for Zn(2+). A glycan (N-linked (GlcNAc...) asparagine) is linked at N271. Zn(2+) contacts are provided by H287 and H289. 2 N-linked (GlcNAc...) asparagine glycosylation sites follow: N338 and N359.

Belongs to the acid sphingomyelinase family. It depends on Zn(2+) as a cofactor.

Its subcellular location is the secreted. This chain is Sphingomyelinase phosphodiesterase D (sgmD), found in Dictyostelium discoideum (Social amoeba).